Reading from the N-terminus, the 270-residue chain is Methylthioribulose-1-phosphate dehydratase (270 aa).

Cys122 provides a ligand contact to substrate. Zn(2+) is bound by residues His140 and His142. Glu165 functions as the Proton donor/acceptor in the catalytic mechanism. A Zn(2+)-binding site is contributed by His230.

Belongs to the aldolase class II family. MtnB subfamily. It depends on Zn(2+) as a cofactor.

It is found in the cytoplasm. It catalyses the reaction 5-(methylsulfanyl)-D-ribulose 1-phosphate = 5-methylsulfanyl-2,3-dioxopentyl phosphate + H2O. Its pathway is amino-acid biosynthesis; L-methionine biosynthesis via salvage pathway; L-methionine from S-methyl-5-thio-alpha-D-ribose 1-phosphate: step 2/6. In terms of biological role, catalyzes the dehydration of methylthioribulose-1-phosphate (MTRu-1-P) into 2,3-diketo-5-methylthiopentyl-1-phosphate (DK-MTP-1-P). The polypeptide is Methylthioribulose-1-phosphate dehydratase (Candida albicans (strain SC5314 / ATCC MYA-2876) (Yeast)).